Consider the following 228-residue polypeptide: 7-cyano-7-deazaguanine synthase (228 aa).

16-26 (FSGGQDSTTCL) is a binding site for ATP. Positions 195, 203, 206, and 209 each coordinate Zn(2+).

Belongs to the QueC family. Requires Zn(2+) as cofactor.

The enzyme catalyses 7-carboxy-7-deazaguanine + NH4(+) + ATP = 7-cyano-7-deazaguanine + ADP + phosphate + H2O + H(+). It functions in the pathway purine metabolism; 7-cyano-7-deazaguanine biosynthesis. Its function is as follows. Catalyzes the ATP-dependent conversion of 7-carboxy-7-deazaguanine (CDG) to 7-cyano-7-deazaguanine (preQ(0)). This Haemophilus influenzae (strain ATCC 51907 / DSM 11121 / KW20 / Rd) protein is 7-cyano-7-deazaguanine synthase.